A 200-amino-acid chain; its full sequence is NADH-quinone oxidoreductase subunit C (200 aa).

This sequence belongs to the complex I 30 kDa subunit family. NDH-1 is composed of 14 different subunits. Subunits NuoB, C, D, E, F, and G constitute the peripheral sector of the complex.

It localises to the cell inner membrane. The enzyme catalyses a quinone + NADH + 5 H(+)(in) = a quinol + NAD(+) + 4 H(+)(out). NDH-1 shuttles electrons from NADH, via FMN and iron-sulfur (Fe-S) centers, to quinones in the respiratory chain. The immediate electron acceptor for the enzyme in this species is believed to be ubiquinone. Couples the redox reaction to proton translocation (for every two electrons transferred, four hydrogen ions are translocated across the cytoplasmic membrane), and thus conserves the redox energy in a proton gradient. In Maricaulis maris (strain MCS10) (Caulobacter maris), this protein is NADH-quinone oxidoreductase subunit C.